The sequence spans 167 residues: uncharacterized protein (167 aa).

The next 4 membrane-spanning stretches (helical) occupy residues 13 to 33 (LIYLFIWGLIISGLSDLTWLI), 37 to 57 (VLAVSLFFISLQFSQKSFLPY), 61 to 81 (WFALVIFIVLMWATLSWKIGE), and 103 to 123 (LLLISLWLFLWNINDAVLVPS).

It is found in the cell membrane. This is an uncharacterized protein from Haemophilus influenzae (strain ATCC 51907 / DSM 11121 / KW20 / Rd).